A 256-amino-acid chain; its full sequence is 2,3,4,5-tetrahydropyridine-2,6-dicarboxylate N-acetyltransferase (256 aa).

Belongs to the transferase hexapeptide repeat family. DapH subfamily.

It catalyses the reaction (S)-2,3,4,5-tetrahydrodipicolinate + acetyl-CoA + H2O = L-2-acetamido-6-oxoheptanedioate + CoA. It functions in the pathway amino-acid biosynthesis; L-lysine biosynthesis via DAP pathway; LL-2,6-diaminopimelate from (S)-tetrahydrodipicolinate (acetylase route): step 1/3. Its function is as follows. Catalyzes the transfer of an acetyl group from acetyl-CoA to tetrahydrodipicolinate. In Lactococcus lactis subsp. lactis (strain IL1403) (Streptococcus lactis), this protein is 2,3,4,5-tetrahydropyridine-2,6-dicarboxylate N-acetyltransferase.